Here is a 160-residue protein sequence, read N- to C-terminus: Transcription elongation factor GreA (160 aa).

The stretch at E12–S76 forms a coiled coil.

This sequence belongs to the GreA/GreB family.

In terms of biological role, necessary for efficient RNA polymerase transcription elongation past template-encoded arresting sites. The arresting sites in DNA have the property of trapping a certain fraction of elongating RNA polymerases that pass through, resulting in locked ternary complexes. Cleavage of the nascent transcript by cleavage factors such as GreA or GreB allows the resumption of elongation from the new 3'terminus. GreA releases sequences of 2 to 3 nucleotides. The polypeptide is Transcription elongation factor GreA (Clostridium botulinum (strain Kyoto / Type A2)).